An 832-amino-acid chain; its full sequence is Cation/H(+) antiporter 21 (832 aa).

Helical transmembrane passes span 33-55, 61-81, 99-119, 132-152, 161-181, 200-220, 236-256, 278-298, 319-339, 352-372, 379-399, and 413-433; these read ISAAAPFFMTQLSVANLTYRILY, LCLPPFVAQILCGLLFSPTVL, LLETFANLALVYNVFLLGLGL, VIIAIVGLLAALLAGAGLYYL, ILAGCMYWSIAFGCTNFPDLA, CAAVVTDLCTWILFIFGMAIF, STIAFVLLCYFVIQPGVAWIF, IICSLITEVCGVHSITGAFLF, FLSGMLMPLFYIICGLRADIG, VVTSASVMVKILSTMFCSIFL, GLAIGALMNTKGTMALVILNA, and HLTLAFLVMSMVVQPLLAIAY. A compositionally biased stretch (polar residues) spans 792 to 802; sequence RQTAENNNQEP. Residues 792–832 form a disordered region; the sequence is RQTAENNNQEPVQGKAKTDHEATPFMEDEDDEVEHQYSMRR.

Belongs to the monovalent cation:proton antiporter 2 (CPA2) transporter (TC 2.A.37) family. CHX (TC 2.A.37.4) subfamily. Specifically expressed in root endodermal cells. Expressed in seedlings, roots, leaves, flowers, flower buds and pollen.

Its subcellular location is the cell membrane. Its function is as follows. Operates as a Na(+)/H(+) antiporter that plays a role in regulation of xylem Na(+) concentration and, consequently, Na(+) accumulation in the leaf. Required for pollen tube guidance, but not for normal pollen development. May also be involved in the development or function of the female gametophyte. The protein is Cation/H(+) antiporter 21 (CHX21) of Arabidopsis thaliana (Mouse-ear cress).